Consider the following 401-residue polypeptide: Formate-dependent phosphoribosylglycinamide formyltransferase (401 aa).

N(1)-(5-phospho-beta-D-ribosyl)glycinamide is bound by residues 22–23 and Glu82; that span reads EL. Residues Arg115, Lys157, 162–167, 197–200, and Glu205 contribute to the ATP site; these read SSGKGQ and EGFI. The region spanning 120–315 is the ATP-grasp domain; that stretch reads RLAAETLGLP…EFELHARAIL (196 aa). Glu274 and Glu286 together coordinate Mg(2+). Residues Asp293, Lys362, and 369–370 contribute to the N(1)-(5-phospho-beta-D-ribosyl)glycinamide site; that span reads RR.

It belongs to the PurK/PurT family. As to quaternary structure, homodimer.

It carries out the reaction N(1)-(5-phospho-beta-D-ribosyl)glycinamide + formate + ATP = N(2)-formyl-N(1)-(5-phospho-beta-D-ribosyl)glycinamide + ADP + phosphate + H(+). Its pathway is purine metabolism; IMP biosynthesis via de novo pathway; N(2)-formyl-N(1)-(5-phospho-D-ribosyl)glycinamide from N(1)-(5-phospho-D-ribosyl)glycinamide (formate route): step 1/1. Its function is as follows. Involved in the de novo purine biosynthesis. Catalyzes the transfer of formate to 5-phospho-ribosyl-glycinamide (GAR), producing 5-phospho-ribosyl-N-formylglycinamide (FGAR). Formate is provided by PurU via hydrolysis of 10-formyl-tetrahydrofolate. The chain is Formate-dependent phosphoribosylglycinamide formyltransferase from Cupriavidus pinatubonensis (strain JMP 134 / LMG 1197) (Cupriavidus necator (strain JMP 134)).